The chain runs to 622 residues: Glutamyl-tRNA(Gln) amidotransferase subunit E (622 aa).

The protein belongs to the GatB/GatE family. GatE subfamily. Heterodimer of GatD and GatE.

It catalyses the reaction L-glutamyl-tRNA(Gln) + L-glutamine + ATP + H2O = L-glutaminyl-tRNA(Gln) + L-glutamate + ADP + phosphate + H(+). Allows the formation of correctly charged Gln-tRNA(Gln) through the transamidation of misacylated Glu-tRNA(Gln) in organisms which lack glutaminyl-tRNA synthetase. The reaction takes place in the presence of glutamine and ATP through an activated gamma-phospho-Glu-tRNA(Gln). The GatDE system is specific for glutamate and does not act on aspartate. The sequence is that of Glutamyl-tRNA(Gln) amidotransferase subunit E from Halobacterium salinarum (strain ATCC 29341 / DSM 671 / R1).